The sequence spans 378 residues: Erythronate-4-phosphate dehydrogenase (378 aa).

Residues serine 45 and threonine 66 each contribute to the substrate site. Residues aspartate 146 and threonine 175 each contribute to the NAD(+) site. Arginine 208 is an active-site residue. Aspartate 232 contributes to the NAD(+) binding site. Glutamate 237 is a catalytic residue. Catalysis depends on histidine 254, which acts as the Proton donor. Residue glycine 257 participates in NAD(+) binding. Tyrosine 258 serves as a coordination point for substrate.

The protein belongs to the D-isomer specific 2-hydroxyacid dehydrogenase family. PdxB subfamily. As to quaternary structure, homodimer.

The protein localises to the cytoplasm. It catalyses the reaction 4-phospho-D-erythronate + NAD(+) = (R)-3-hydroxy-2-oxo-4-phosphooxybutanoate + NADH + H(+). Its pathway is cofactor biosynthesis; pyridoxine 5'-phosphate biosynthesis; pyridoxine 5'-phosphate from D-erythrose 4-phosphate: step 2/5. Its function is as follows. Catalyzes the oxidation of erythronate-4-phosphate to 3-hydroxy-2-oxo-4-phosphonooxybutanoate. The sequence is that of Erythronate-4-phosphate dehydrogenase from Escherichia coli O6:H1 (strain CFT073 / ATCC 700928 / UPEC).